We begin with the raw amino-acid sequence, 567 residues long: DNA ligase B (567 aa).

Lysine 132 (N6-AMP-lysine intermediate) is an active-site residue.

The protein belongs to the NAD-dependent DNA ligase family. LigB subfamily.

The catalysed reaction is NAD(+) + (deoxyribonucleotide)n-3'-hydroxyl + 5'-phospho-(deoxyribonucleotide)m = (deoxyribonucleotide)n+m + AMP + beta-nicotinamide D-nucleotide.. Catalyzes the formation of phosphodiester linkages between 5'-phosphoryl and 3'-hydroxyl groups in double-stranded DNA using NAD as a coenzyme and as the energy source for the reaction. In Yersinia pseudotuberculosis serotype IB (strain PB1/+), this protein is DNA ligase B.